Here is a 270-residue protein sequence, read N- to C-terminus: GTP cyclohydrolase FolE2 2 (270 aa).

It belongs to the GTP cyclohydrolase IV family.

The catalysed reaction is GTP + H2O = 7,8-dihydroneopterin 3'-triphosphate + formate + H(+). It functions in the pathway cofactor biosynthesis; 7,8-dihydroneopterin triphosphate biosynthesis; 7,8-dihydroneopterin triphosphate from GTP: step 1/1. In terms of biological role, converts GTP to 7,8-dihydroneopterin triphosphate. The chain is GTP cyclohydrolase FolE2 2 from Dechloromonas aromatica (strain RCB).